Reading from the N-terminus, the 50-residue chain is MPQKYRLLSLIVICFTLLFFTWMIRDSLCELHIKQESYELAAFLACKLKE.

A helical transmembrane segment spans residues 7 to 24 (LLSLIVICFTLLFFTWMI).

It belongs to the Hok/Gef family.

The protein localises to the cell inner membrane. Toxic component of a type I toxin-antitoxin (TA) system. When overexpressed kills cells within minutes; causes collapse of the transmembrane potential and arrest of respiration. Its toxic effect is probably neutralized by antisense antitoxin RNA SokA. This chain is Protein HokA, found in Escherichia coli (strain K12).